A 187-amino-acid chain; its full sequence is uncharacterized protein (187 aa).

Residues 1-95 (MTTMKRSADP…GSTRPSARYG (95 aa)) form a disordered region. The span at 46-80 (RARRSRGPKRFLGKRNYRRARARKPGKRDRAHSSK) shows a compositional bias: basic residues.

The protein localises to the mitochondrion. This is an uncharacterized protein from Arabidopsis thaliana (Mouse-ear cress).